A 333-amino-acid polypeptide reads, in one-letter code: tRNA U34 carboxymethyltransferase (333 aa).

Carboxy-S-adenosyl-L-methionine contacts are provided by residues Lys-97, Trp-111, Lys-116, Gly-136, 158-160 (DPS), 189-190 (IE), Met-205, Tyr-209, and Arg-324.

The protein belongs to the class I-like SAM-binding methyltransferase superfamily. CmoB family. As to quaternary structure, homotetramer.

It carries out the reaction carboxy-S-adenosyl-L-methionine + 5-hydroxyuridine(34) in tRNA = 5-carboxymethoxyuridine(34) in tRNA + S-adenosyl-L-homocysteine + H(+). Catalyzes carboxymethyl transfer from carboxy-S-adenosyl-L-methionine (Cx-SAM) to 5-hydroxyuridine (ho5U) to form 5-carboxymethoxyuridine (cmo5U) at position 34 in tRNAs. This is tRNA U34 carboxymethyltransferase from Chromohalobacter salexigens (strain ATCC BAA-138 / DSM 3043 / CIP 106854 / NCIMB 13768 / 1H11).